The primary structure comprises 148 residues: Snaclec crotocetin (148 aa).

Residues 1–23 (MGRLVFVSFGLLVVFLSLTGTGA) form the signal peptide. 3 disulfide bridges follow: cysteine 27–cysteine 38, cysteine 55–cysteine 144, and cysteine 121–cysteine 136. One can recognise a C-type lectin domain in the interval 34–145 (YEGHCYKVFK…CSKTHKVVCK (112 aa)).

This sequence belongs to the snaclec family. In terms of assembly, heterodimer; disulfide-linked. Expressed by the venom gland.

Its subcellular location is the secreted. Interferes with one step of hemostasis (modulation of platelet aggregation, or coagulation cascade, for example). The chain is Snaclec crotocetin from Crotalus durissus terrificus (South American rattlesnake).